The primary structure comprises 461 residues: Growth/differentiation factor 7 (461 aa).

Positions 1–19 (MDLSAAAALCLWLLSACRP) are cleaved as a signal peptide. Positions 20 to 315 (RDGLEAAAVL…ANLGGRRRRR (296 aa)) are excised as a propeptide. N-linked (GlcNAc...) asparagine glycosylation occurs at N79. The disordered stretch occupies residues 287 to 360 (LRAAAEPPPD…GHGRRGRSRC (74 aa)). The span at 323-350 (GAQGSGGGGGGGGGGGGGGGGGGGGAGR) shows a compositional bias: gly residues. Positions 351–360 (GHGRRGRSRC) are enriched in basic residues. Intrachain disulfides connect C360-C426, C389-C458, and C393-C460.

It belongs to the TGF-beta family. As to quaternary structure, homodimer; disulfide-linked.

The protein resides in the secreted. This chain is Growth/differentiation factor 7 (Gdf7), found in Mus musculus (Mouse).